Here is a 230-residue protein sequence, read N- to C-terminus: Lipopolysaccharide core heptose(II) kinase WaaY (230 aa).

It belongs to the protein kinase superfamily. RfaY/WaaY family.

It carries out the reaction alpha-D-Glc-(1-&gt;3)-[L-alpha-D-Hep-(1-&gt;7)]-L-alpha-D-Hep-(1-&gt;3)-4-O-PO3(2-)-L-alpha-D-Hep-(1-&gt;5)-[alpha-Kdo-(2-&gt;4)]-alpha-Kdo-(2-&gt;6)-lipid A + ATP = alpha-D-Glc-(1-&gt;3)-[L-alpha-D-Hep-(1-&gt;7)]-4-O-PO3(2-)-L-alpha-D-Hep-(1-&gt;3)-4-O-PO3(2-)-L-alpha-D-Hep-(1-&gt;5)-[alpha-Kdo-(2-&gt;4)]-alpha-Kdo-(2-&gt;6)-lipid A + ADP + H(+). The protein operates within bacterial outer membrane biogenesis; LPS core biosynthesis. In terms of biological role, kinase involved in the biosynthesis of the core oligosaccharide region of lipopolysaccharide (LPS). Catalyzes the phosphorylation of the second heptose unit (HepII) of the inner core. The chain is Lipopolysaccharide core heptose(II) kinase WaaY from Escherichia coli.